Here is a 296-residue protein sequence, read N- to C-terminus: GTPase Era (296 aa).

One can recognise an Era-type G domain in the interval 7–174; that stretch reads RTGFVAVVGR…LDEIAARLPE (168 aa). Residues 15–22 form a G1 region; that stretch reads GRPNVGKS. Position 15-22 (15-22) interacts with GTP; sequence GRPNVGKS. The tract at residues 41-45 is G2; the sequence is QTTRH. Positions 62 to 65 are G3; it reads DTPG. GTP-binding positions include 62-66 and 123-126; these read DTPGF and SKID. The interval 123–126 is G4; sequence SKID. Residues 153-155 form a G5 region; sequence VSA. Residues 205–281 form the KH type-2 domain; the sequence is VGDELPYGCT…HLEVYIKVRK (77 aa).

Belongs to the TRAFAC class TrmE-Era-EngA-EngB-Septin-like GTPase superfamily. Era GTPase family. In terms of assembly, monomer.

The protein resides in the cytoplasm. It is found in the cell inner membrane. In terms of biological role, an essential GTPase that binds both GDP and GTP, with rapid nucleotide exchange. Plays a role in 16S rRNA processing and 30S ribosomal subunit biogenesis and possibly also in cell cycle regulation and energy metabolism. This is GTPase Era from Bordetella petrii (strain ATCC BAA-461 / DSM 12804 / CCUG 43448).